The primary structure comprises 145 residues: D-aminoacyl-tRNA deacylase (145 aa).

A Gly-cisPro motif, important for rejection of L-amino acids motif is present at residues 137 to 138; that stretch reads GP.

The protein belongs to the DTD family. In terms of assembly, homodimer.

The protein localises to the cytoplasm. The enzyme catalyses glycyl-tRNA(Ala) + H2O = tRNA(Ala) + glycine + H(+). The catalysed reaction is a D-aminoacyl-tRNA + H2O = a tRNA + a D-alpha-amino acid + H(+). Functionally, an aminoacyl-tRNA editing enzyme that deacylates mischarged D-aminoacyl-tRNAs. Also deacylates mischarged glycyl-tRNA(Ala), protecting cells against glycine mischarging by AlaRS. Acts via tRNA-based rather than protein-based catalysis; rejects L-amino acids rather than detecting D-amino acids in the active site. By recycling D-aminoacyl-tRNA to D-amino acids and free tRNA molecules, this enzyme counteracts the toxicity associated with the formation of D-aminoacyl-tRNA entities in vivo and helps enforce protein L-homochirality. The chain is D-aminoacyl-tRNA deacylase from Carboxydothermus hydrogenoformans (strain ATCC BAA-161 / DSM 6008 / Z-2901).